Reading from the N-terminus, the 265-residue chain is 4-diphosphocytidyl-2-C-methyl-D-erythritol kinase (265 aa).

The active site involves Lys-8. 95–105 (PIGAGLGGGSS) lines the ATP pocket. The active site involves Asp-135.

Belongs to the GHMP kinase family. IspE subfamily.

The enzyme catalyses 4-CDP-2-C-methyl-D-erythritol + ATP = 4-CDP-2-C-methyl-D-erythritol 2-phosphate + ADP + H(+). It functions in the pathway isoprenoid biosynthesis; isopentenyl diphosphate biosynthesis via DXP pathway; isopentenyl diphosphate from 1-deoxy-D-xylulose 5-phosphate: step 3/6. Its function is as follows. Catalyzes the phosphorylation of the position 2 hydroxy group of 4-diphosphocytidyl-2C-methyl-D-erythritol. This Ureaplasma urealyticum serovar 10 (strain ATCC 33699 / Western) protein is 4-diphosphocytidyl-2-C-methyl-D-erythritol kinase.